Reading from the N-terminus, the 187-residue chain is Shikimate kinase (187 aa).

14 to 19 (TSGKST) contributes to the ATP binding site. Ser-18 contributes to the Mg(2+) binding site. Asp-36, Arg-60, and Gly-82 together coordinate substrate. Residue Arg-120 participates in ATP binding. Arg-147 is a substrate binding site.

It belongs to the shikimate kinase family. Monomer. Mg(2+) is required as a cofactor.

It is found in the cytoplasm. It carries out the reaction shikimate + ATP = 3-phosphoshikimate + ADP + H(+). It participates in metabolic intermediate biosynthesis; chorismate biosynthesis; chorismate from D-erythrose 4-phosphate and phosphoenolpyruvate: step 5/7. Functionally, catalyzes the specific phosphorylation of the 3-hydroxyl group of shikimic acid using ATP as a cosubstrate. This is Shikimate kinase from Chloroherpeton thalassium (strain ATCC 35110 / GB-78).